Here is a 419-residue protein sequence, read N- to C-terminus: L-rhamnose isomerase (419 aa).

Mn(2+)-binding residues include histidine 262, aspartate 294, and aspartate 296.

The protein belongs to the rhamnose isomerase family. Homotetramer. Requires Mn(2+) as cofactor.

Its subcellular location is the cytoplasm. It catalyses the reaction L-rhamnopyranose = L-rhamnulose. The protein operates within carbohydrate degradation; L-rhamnose degradation; glycerone phosphate from L-rhamnose: step 1/3. Catalyzes the interconversion of L-rhamnose and L-rhamnulose. The chain is L-rhamnose isomerase from Escherichia coli O127:H6 (strain E2348/69 / EPEC).